Reading from the N-terminus, the 987-residue chain is Ras guanine nucleotide exchange factor efc25 (987 aa).

Basic and acidic residues predominate over residues Met1 to Arg10. Disordered regions lie at residues Met1 to Ser50, Phe100 to Arg130, and Asn529 to Ser552. Low complexity predominate over residues Thr19–Ser39. Composition is skewed to polar residues over residues Asp40–Ser50, Ser102–Ser111, and Arg540–Ser552. At Ser552 the chain carries Phosphoserine. Residues Ser590 to Trp723 enclose the N-terminal Ras-GEF domain. The 234-residue stretch at Thr752 to Arg985 folds into the Ras-GEF domain.

It is found in the cytoplasm. Has a role in chromosome segregation and cell morphology upstream of the ras1-scd1 pathway. Promotes the exchange of ras1-bound GDP by GTP leading to its activation. The protein is Ras guanine nucleotide exchange factor efc25 (efc25) of Schizosaccharomyces pombe (strain 972 / ATCC 24843) (Fission yeast).